The sequence spans 518 residues: Protein FAM98A (518 aa).

2 disordered regions span residues 297–415 (VLMG…GHSS) and 434–518 (GSGY…HYTS). Residues 302-311 (VPDRGGRPNE) show a composition bias toward basic and acidic residues. Gly residues-rich tracts occupy residues 349–364 (GGRG…GGRG), 383–396 (WTDG…GYQD), and 405–415 (QPGGYHGGHSS). Over residues 447-459 (RYQDGGHHGDRGG) the composition is skewed to basic and acidic residues. The segment covering 460–484 (GRGGRGGRGGRGGRAGQGGGWGGRG) has biased composition (gly residues). A compositionally biased stretch (low complexity) spans 488–504 (YHQGGQFEQHFQHGGYQ). Polar residues predominate over residues 505 to 518 (YNHSGFGQGRHYTS).

The protein belongs to the FAM98 family. As to quaternary structure, interacts (via N- and C-terminus) with DDX1. Interacts (via N- and C-terminus) with C14orf166. Interacts with FAM98B. Interacts with PLEKHM1 (via N- and C-terminus). In terms of tissue distribution, expressed strongly in colorectal cancer cells. Expressed strongly in colorectal cancer tissues compared to wild-type colon samples (at protein level). Expressed strongly in colorectal cancer tissues compared to wild-type colon samples.

Its function is as follows. Positively stimulates PRMT1-induced protein arginine methylation. Involved in skeletal homeostasis. Positively regulates lysosome peripheral distribution and ruffled border formation in osteoclasts. The protein is Protein FAM98A of Homo sapiens (Human).